We begin with the raw amino-acid sequence, 66 residues long: Large ribosomal subunit protein uL29 (66 aa).

Belongs to the universal ribosomal protein uL29 family.

The polypeptide is Large ribosomal subunit protein uL29 (Petrotoga mobilis (strain DSM 10674 / SJ95)).